Here is a 145-residue protein sequence, read N- to C-terminus: Small ribosomal subunit protein uS9 (145 aa).

Belongs to the universal ribosomal protein uS9 family.

Its subcellular location is the cytoplasm. In Fritillaria agrestis (Stinkbells), this protein is Small ribosomal subunit protein uS9 (RPS16).